Consider the following 143-residue polypeptide: Transcriptional regulator MraZ (143 aa).

SpoVT-AbrB domains follow at residues 5 to 47 (TYTP…PKEE) and 76 to 119 (ADEQ…DAQA).

Belongs to the MraZ family. In terms of assembly, forms oligomers.

It is found in the cytoplasm. The protein localises to the nucleoid. This is Transcriptional regulator MraZ from Corynebacterium efficiens (strain DSM 44549 / YS-314 / AJ 12310 / JCM 11189 / NBRC 100395).